We begin with the raw amino-acid sequence, 499 residues long: Cysteine--tRNA ligase (499 aa).

Cys-29 is a binding site for Zn(2+). Residues 31-41 (VTVYDLCHLGH) carry the 'HIGH' region motif. Zn(2+)-binding residues include Cys-213, His-238, and Glu-242. The short motif at 270 to 274 (KMSKS) is the 'KMSKS' region element. Lys-273 is a binding site for ATP.

It belongs to the class-I aminoacyl-tRNA synthetase family. In terms of assembly, monomer. Zn(2+) is required as a cofactor.

Its subcellular location is the cytoplasm. The enzyme catalyses tRNA(Cys) + L-cysteine + ATP = L-cysteinyl-tRNA(Cys) + AMP + diphosphate. This chain is Cysteine--tRNA ligase, found in Synechococcus sp. (strain CC9902).